Reading from the N-terminus, the 108-residue chain is Ig kappa chain V-VI region NQ2-6.1 (108 aa).

The segment at glutamine 1–cysteine 23 is framework-1. A disulfide bridge connects residues cysteine 23 and cysteine 87. The segment at serine 24–tyrosine 33 is complementarity-determining-1. The tract at residues tryptophan 34 to tyrosine 48 is framework-2. Residues aspartate 49–serine 55 are complementarity-determining-2. The interval glycine 56–cysteine 87 is framework-3. The interval glutamine 88 to threonine 98 is complementarity-determining-3. Residues phenylalanine 99 to lysine 108 are framework-4.

The protein is Ig kappa chain V-VI region NQ2-6.1 of Mus musculus (Mouse).